A 58-amino-acid chain; its full sequence is Short neurotoxin MS11 (58 aa).

4 disulfide bridges follow: C3/C20, C13/C38, C42/C50, and C51/C56.

The protein belongs to the three-finger toxin family. Short-chain subfamily. Expressed by the venom gland.

The protein localises to the secreted. Its function is as follows. Produces peripheral paralysis by blocking neuromuscular transmission at the postsynaptic site. Binds to and inhibits the endogenous nicotinic acetylcholine receptors (nAChR) in the human rhabdomyosarcoma TE 671 cell line with an IC(50) of 266 mM. Not toxic to mice by intraperitoneal injection or to zebrafish by injection at the back dorsolateral region. The sequence is that of Short neurotoxin MS11 from Micrurus surinamensis (Surinam coral snake).